The chain runs to 496 residues: UDP-N-acetylmuramoyl-L-alanyl-D-glutamate--2,6-diaminopimelate ligase (496 aa).

Ser32 is a UDP-N-acetyl-alpha-D-muramoyl-L-alanyl-D-glutamate binding site. 116 to 122 (GTNGKTT) is an ATP binding site. UDP-N-acetyl-alpha-D-muramoyl-L-alanyl-D-glutamate is bound by residues 158 to 159 (TT), Ser185, Gln191, and Arg193. Lys225 carries the N6-carboxylysine modification. Meso-2,6-diaminopimelate-binding positions include Arg389, 413 to 416 (DNPR), Gly464, and Glu468. The Meso-diaminopimelate recognition motif signature appears at 413–416 (DNPR).

This sequence belongs to the MurCDEF family. MurE subfamily. Mg(2+) serves as cofactor. In terms of processing, carboxylation is probably crucial for Mg(2+) binding and, consequently, for the gamma-phosphate positioning of ATP.

The protein resides in the cytoplasm. It catalyses the reaction UDP-N-acetyl-alpha-D-muramoyl-L-alanyl-D-glutamate + meso-2,6-diaminopimelate + ATP = UDP-N-acetyl-alpha-D-muramoyl-L-alanyl-gamma-D-glutamyl-meso-2,6-diaminopimelate + ADP + phosphate + H(+). The protein operates within cell wall biogenesis; peptidoglycan biosynthesis. Catalyzes the addition of meso-diaminopimelic acid to the nucleotide precursor UDP-N-acetylmuramoyl-L-alanyl-D-glutamate (UMAG) in the biosynthesis of bacterial cell-wall peptidoglycan. This is UDP-N-acetylmuramoyl-L-alanyl-D-glutamate--2,6-diaminopimelate ligase from Nostoc sp. (strain PCC 7120 / SAG 25.82 / UTEX 2576).